The primary structure comprises 217 residues: 3,4-dihydroxy-2-butanone 4-phosphate synthase (217 aa).

D-ribulose 5-phosphate contacts are provided by residues 37-38 (RE), aspartate 42, 150-154 (RRGHT), and glutamate 174. Mg(2+) is bound at residue glutamate 38. Histidine 153 is a binding site for Mg(2+).

Belongs to the DHBP synthase family. As to quaternary structure, homodimer. It depends on Mg(2+) as a cofactor. Mn(2+) serves as cofactor.

The enzyme catalyses D-ribulose 5-phosphate = (2S)-2-hydroxy-3-oxobutyl phosphate + formate + H(+). Its pathway is cofactor biosynthesis; riboflavin biosynthesis; 2-hydroxy-3-oxobutyl phosphate from D-ribulose 5-phosphate: step 1/1. Functionally, catalyzes the conversion of D-ribulose 5-phosphate to formate and 3,4-dihydroxy-2-butanone 4-phosphate. This Aeromonas salmonicida (strain A449) protein is 3,4-dihydroxy-2-butanone 4-phosphate synthase.